Here is a 374-residue protein sequence, read N- to C-terminus: MLRRITCSSSLASPSLFLRFFRQLPRSYSSPTTIAVSGRNIRRLSTPTTLRCICSHSSSEIISEHPPFVRVYKDGRIERLSGTETVPASLNPRNDVVSKDVVYSPGHNLSVRLFLPHKSTQLAAGNKLPLLIYFHGGAWINESPFSPIYHNFLTEVVKSANCLAVSVQYRRAPEDPVPAAYEDTWSAIQWIFSHSCGSGEEDWINKYADFERVFLAGDSAGGNISHHMAMRAGKEKLKPRIKGTVIVHPAIWGKDPVDEHDVQDREIRDGVAEVWEKIVSPNSVDGADDPWFNVVGSGSNFSGMGCDKVLVEVAGKDVFWRQGLAYAAKLKKSGWKGEVEVIEEEDEEHCFHLLNPSSENAPSFMKRFVEFITG.

The N-terminal 52 residues, 1–52 (MLRRITCSSSLASPSLFLRFFRQLPRSYSSPTTIAVSGRNIRRLSTPTTLRC), are a transit peptide targeting the mitochondrion. The short motif at 135 to 137 (HGG) is the Involved in the stabilization of the negatively charged intermediate by the formation of the oxyanion hole element. Catalysis depends on residues serine 219, aspartate 317, and histidine 349.

It belongs to the 'GDXG' lipolytic enzyme family. As to expression, expressed in leaves, stems, flowers and siliques.

Its subcellular location is the mitochondrion. The enzyme catalyses a carboxylic ester + H2O = an alcohol + a carboxylate + H(+). In terms of biological role, carboxylesterase acting on esters with varying acyl chain length. The polypeptide is Probable carboxylesterase 4, mitochondrial (CXE4) (Arabidopsis thaliana (Mouse-ear cress)).